Consider the following 435-residue polypeptide: MIRKMSKNVVVIGTQWGDEGKGKIVDWLAESVQGVVRFQGGHNAGHTLWINGKKTILRLIPSGIMHDGVTCFIGNGVVLSPEALLREIEELEAAGLDVRSRLQVSEICTLILPYHVAVDKAREARKGEGKIGTTGRGIGPAYEDKVARRALRVQDLFNPALFDEKLAEVLDYHNFVLTQYLGAEPVSANEVRDQAMALAPALAPMVRDVSSNLFVLQQEGKNLLFEGAQGALLDVDHGTYPFVTSSNCVAGAASAGAGVGPQALQYVLGITKAYTTRVGSGPFPTELVDEIGTRLATIGKEFGSVTGRPRRCGWFDGAALKRSVRLNGISGLCITKLDVLDGLETIQLGVGYRVNGEFRDVLPYGAHAVAQAQAVLEELPGWTESTVGITEYSKLPVNARRYLERVAEVCGVPIDLVSTGPDRNETIVLRHPFKG.

GTP contacts are provided by residues 17–23 and 45–47; these read GDEGKGK and GHT. Asp-18 functions as the Proton acceptor in the catalytic mechanism. The Mg(2+) site is built by Asp-18 and Gly-45. Residues 18–21, 43–46, Thr-134, Arg-148, Gln-229, Thr-244, and Arg-308 each bind IMP; these read DEGK and NAGH. The active-site Proton donor is His-46. 304–310 is a binding site for substrate; it reads SVTGRPR. Residues Arg-310, 336-338, and 418-420 each bind GTP; these read KLD and STG.

The protein belongs to the adenylosuccinate synthetase family. In terms of assembly, homodimer. The cofactor is Mg(2+).

It is found in the cytoplasm. It carries out the reaction IMP + L-aspartate + GTP = N(6)-(1,2-dicarboxyethyl)-AMP + GDP + phosphate + 2 H(+). It participates in purine metabolism; AMP biosynthesis via de novo pathway; AMP from IMP: step 1/2. Plays an important role in the de novo pathway of purine nucleotide biosynthesis. Catalyzes the first committed step in the biosynthesis of AMP from IMP. This chain is Adenylosuccinate synthetase, found in Bordetella parapertussis (strain 12822 / ATCC BAA-587 / NCTC 13253).